The primary structure comprises 427 residues: Putative zinc protease AlbF (427 aa).

Histidine 66 contributes to the Zn(2+) binding site. The active-site Proton acceptor is the glutamate 69. 2 residues coordinate Zn(2+): histidine 70 and glutamate 142.

This sequence belongs to the peptidase M16 family. The cofactor is Zn(2+).

Functionally, required for production of the bacteriocin subtilosin. Could catalyze some step in the processing of presubtilosin. This Bacillus subtilis protein is Putative zinc protease AlbF (albF).